The primary structure comprises 123 residues: Small ribosomal subunit protein uS13 (123 aa).

Residues 95 to 123 are disordered; that stretch reads GLPVRGQKTKTNARTRKGPKKAVASKKKK.

It belongs to the universal ribosomal protein uS13 family. As to quaternary structure, part of the 30S ribosomal subunit. Forms a loose heterodimer with protein S19. Forms two bridges to the 50S subunit in the 70S ribosome.

Functionally, located at the top of the head of the 30S subunit, it contacts several helices of the 16S rRNA. In the 70S ribosome it contacts the 23S rRNA (bridge B1a) and protein L5 of the 50S subunit (bridge B1b), connecting the 2 subunits; these bridges are implicated in subunit movement. Contacts the tRNAs in the A and P-sites. The sequence is that of Small ribosomal subunit protein uS13 from Clostridium acetobutylicum (strain ATCC 824 / DSM 792 / JCM 1419 / IAM 19013 / LMG 5710 / NBRC 13948 / NRRL B-527 / VKM B-1787 / 2291 / W).